The primary structure comprises 142 residues: Glycine-rich RNA-binding protein 1 (142 aa).

An RRM domain is found at 1–65; it reads NSLHSAFSTY…RNITVNEAQS (65 aa). The segment at 48-101 is disordered; that stretch reads MNGKELDGRNITVNEAQSRGGRGGGGGGGYGGGRGGGGGYGRRDGGGGGYGGGG. The segment covering 67–101 has biased composition (gly residues); sequence GGRGGGGGGGYGGGRGGGGGYGRRDGGGGGYGGGG.

In terms of biological role, possibly has a role in RNA transcription or processing during stress. The chain is Glycine-rich RNA-binding protein 1 (GRP1) from Sorghum bicolor (Sorghum).